The primary structure comprises 306 residues: N-acetylmuramic acid 6-phosphate etherase (306 aa).

Residues 62 to 225 form the SIS domain; sequence IAQAFQNGGR…TTASMIRIGK (164 aa). The active-site Proton donor is glutamate 90. Glutamate 121 is an active-site residue.

Belongs to the GCKR-like family. MurNAc-6-P etherase subfamily. In terms of assembly, homodimer.

The enzyme catalyses N-acetyl-D-muramate 6-phosphate + H2O = N-acetyl-D-glucosamine 6-phosphate + (R)-lactate. It functions in the pathway amino-sugar metabolism; 1,6-anhydro-N-acetylmuramate degradation. Its pathway is amino-sugar metabolism; N-acetylmuramate degradation. The protein operates within cell wall biogenesis; peptidoglycan recycling. Specifically catalyzes the cleavage of the D-lactyl ether substituent of MurNAc 6-phosphate, producing GlcNAc 6-phosphate and D-lactate. Together with AnmK, is also required for the utilization of anhydro-N-acetylmuramic acid (anhMurNAc) either imported from the medium or derived from its own cell wall murein, and thus plays a role in cell wall recycling. The protein is N-acetylmuramic acid 6-phosphate etherase of Vibrio atlanticus (strain LGP32) (Vibrio splendidus (strain Mel32)).